Here is a 146-residue protein sequence, read N- to C-terminus: Large ribosomal subunit protein uL13 (146 aa).

This sequence belongs to the universal ribosomal protein uL13 family. As to quaternary structure, part of the 50S ribosomal subunit.

In terms of biological role, this protein is one of the early assembly proteins of the 50S ribosomal subunit, although it is not seen to bind rRNA by itself. It is important during the early stages of 50S assembly. In Malacoplasma penetrans (strain HF-2) (Mycoplasma penetrans), this protein is Large ribosomal subunit protein uL13.